Reading from the N-terminus, the 512-residue chain is Pentatricopeptide repeat-containing protein At1g64583, mitochondrial (512 aa).

Residues 1–34 (MRRLIVTGIATSTAKGFRRVVNPNLLGGGAAARA) constitute a mitochondrion transit peptide. PPR repeat units follow at residues 70-104 (SIVDFTRLLTATANLRRYETVIYFSQKMELYGISH), 105-139 (DLYSFTILIHCFCRCSRLSFALSVLGKMMKLGYEP), 140-174 (SIVTFGSLLHGFCLVNRIGDAFSLVILMVKSGYEP), 175-209 (NVVVYNTLIDGLCKNGELNIALELLNEMEKKGLGA), 210-244 (DVVTYNTLLTGLCYSGRWSDAARMLRDMMKRSINP), 245-279 (DVVTFTALIDVFVKQGNLDEAQELYKEMIQSSVDP), 280-314 (NNVTYNSIINGLCMHGRLYDAKKTFDLMASKGCFP), 315-349 (NVVTYNTLISGFCKFRMVDEGMKLFQRMSCEGFNA), 350-384 (DIFTYNTLIHGYCQVGKLRVALDIFCWMVSRRVTP), 385-415 (DIITHCILLHGLCVNGEIESALVKFDDMRES), 420-454 (GIVAYNIMIHGLCKADKVEKAWELFCRLPVEGVKP), and 455-489 (DARTYTIMILGLCKNGPRREADELIRRMKEEGIIC).

Belongs to the PPR family. P subfamily.

The protein resides in the mitochondrion. The protein is Pentatricopeptide repeat-containing protein At1g64583, mitochondrial of Arabidopsis thaliana (Mouse-ear cress).